A 194-amino-acid polypeptide reads, in one-letter code: Peptidyl-tRNA hydrolase (194 aa).

TRNA is bound at residue tyrosine 17. The active-site Proton acceptor is histidine 22. Positions 68, 70, and 116 each coordinate tRNA.

This sequence belongs to the PTH family. As to quaternary structure, monomer.

Its subcellular location is the cytoplasm. It catalyses the reaction an N-acyl-L-alpha-aminoacyl-tRNA + H2O = an N-acyl-L-amino acid + a tRNA + H(+). In terms of biological role, hydrolyzes ribosome-free peptidyl-tRNAs (with 1 or more amino acids incorporated), which drop off the ribosome during protein synthesis, or as a result of ribosome stalling. Functionally, catalyzes the release of premature peptidyl moieties from peptidyl-tRNA molecules trapped in stalled 50S ribosomal subunits, and thus maintains levels of free tRNAs and 50S ribosomes. The protein is Peptidyl-tRNA hydrolase of Pseudomonas syringae pv. tomato (strain ATCC BAA-871 / DC3000).